A 500-amino-acid chain; its full sequence is NAD(P)H-quinone oxidoreductase chain 4, chloroplastic (500 aa).

14 consecutive transmembrane segments (helical) span residues 4–24 (FPWLTIIVVLPIFAGSLIFFL), 31–51 (VIFWYTICISILELLLTTYAF), 84–104 (GLSIGPILLTGFITTLATLAA), 111–131 (ARLFHFLMLVMYSGQIGLFSC), 134–154 (LLLFFLMWEFELIPVYLLLSM), 167–187 (FILYTAGGSVFLLMGALGIGL), 212–232 (IFYIGFFIAFAVKLPIIPLHT), 242–262 (HYSTCMLLAGILLKMGAYGLV), 272–292 (AHSLFSPWLMIVGAMQIIYAA), 308–328 (SSVSHMGFLIIGIGSITDIGL), 330–350 (GALLQIISHGFIGAALFFLAG), 386–406 (LALPGMSGFVTEFIVFFGLIT), 411–431 (LLMAKILIPFVMAIGIILTPI), and 462–482 (LFLSISIFLPILGIGLYPDFV).

The protein belongs to the complex I subunit 4 family.

Its subcellular location is the plastid. The protein localises to the chloroplast thylakoid membrane. The catalysed reaction is a plastoquinone + NADH + (n+1) H(+)(in) = a plastoquinol + NAD(+) + n H(+)(out). The enzyme catalyses a plastoquinone + NADPH + (n+1) H(+)(in) = a plastoquinol + NADP(+) + n H(+)(out). The sequence is that of NAD(P)H-quinone oxidoreductase chain 4, chloroplastic from Jasminum nudiflorum (Winter jasmine).